The sequence spans 233 residues: Small ribosomal subunit protein uS2 (233 aa).

This sequence belongs to the universal ribosomal protein uS2 family.

This is Small ribosomal subunit protein uS2 from Prochlorococcus marinus (strain MIT 9312).